The chain runs to 489 residues: L-arabinose isomerase (489 aa).

Mn(2+) is bound by residues Glu300, Glu325, His342, and His441.

It belongs to the arabinose isomerase family. The cofactor is Mn(2+).

The catalysed reaction is beta-L-arabinopyranose = L-ribulose. It functions in the pathway carbohydrate degradation; L-arabinose degradation via L-ribulose; D-xylulose 5-phosphate from L-arabinose (bacterial route): step 1/3. Its function is as follows. Catalyzes the conversion of L-arabinose to L-ribulose. The sequence is that of L-arabinose isomerase from Clostridium beijerinckii (strain ATCC 51743 / NCIMB 8052) (Clostridium acetobutylicum).